The chain runs to 599 residues: Aspartate--tRNA(Asp/Asn) ligase (599 aa).

Glutamate 173 provides a ligand contact to L-aspartate. The segment at 197–200 is aspartate; it reads QLYK. Arginine 219 contacts L-aspartate. Residues 219–221 and glutamine 228 each bind ATP; that span reads RDE. L-aspartate is bound at residue histidine 451. Residue glutamate 484 coordinates ATP. Arginine 491 serves as a coordination point for L-aspartate. 536–539 provides a ligand contact to ATP; that stretch reads GLDR.

It belongs to the class-II aminoacyl-tRNA synthetase family. Type 1 subfamily. As to quaternary structure, homodimer.

The protein localises to the cytoplasm. It catalyses the reaction tRNA(Asx) + L-aspartate + ATP = L-aspartyl-tRNA(Asx) + AMP + diphosphate. Functionally, aspartyl-tRNA synthetase with relaxed tRNA specificity since it is able to aspartylate not only its cognate tRNA(Asp) but also tRNA(Asn). Reaction proceeds in two steps: L-aspartate is first activated by ATP to form Asp-AMP and then transferred to the acceptor end of tRNA(Asp/Asn). In Methylococcus capsulatus (strain ATCC 33009 / NCIMB 11132 / Bath), this protein is Aspartate--tRNA(Asp/Asn) ligase.